Here is a 150-residue protein sequence, read N- to C-terminus: Large ribosomal subunit protein bL9 (150 aa).

The protein belongs to the bacterial ribosomal protein bL9 family.

Binds to the 23S rRNA. The sequence is that of Large ribosomal subunit protein bL9 from Serratia proteamaculans (strain 568).